The following is a 260-amino-acid chain: GTP cyclohydrolase FolE2 (260 aa).

It belongs to the GTP cyclohydrolase IV family.

The catalysed reaction is GTP + H2O = 7,8-dihydroneopterin 3'-triphosphate + formate + H(+). Its pathway is cofactor biosynthesis; 7,8-dihydroneopterin triphosphate biosynthesis; 7,8-dihydroneopterin triphosphate from GTP: step 1/1. In terms of biological role, converts GTP to 7,8-dihydroneopterin triphosphate. In Desulfosudis oleivorans (strain DSM 6200 / JCM 39069 / Hxd3) (Desulfococcus oleovorans), this protein is GTP cyclohydrolase FolE2.